A 261-amino-acid polypeptide reads, in one-letter code: Zinc import ATP-binding protein ZnuC (261 aa).

In terms of domain architecture, ABC transporter spans 5–220 (ISLKALSVTF…PSYIALFGSA (216 aa)). 37–44 (GPNGAGKS) provides a ligand contact to ATP. A disordered region spans residues 236-261 (HHDLAGQPVSGDATQCNHHHHGHHHD). A compositionally biased stretch (basic residues) spans 252–261 (NHHHHGHHHD).

It belongs to the ABC transporter superfamily. Zinc importer (TC 3.A.1.15.5) family. The complex is composed of two ATP-binding proteins (ZnuC), two transmembrane proteins (ZnuB) and a solute-binding protein (ZnuA).

The protein resides in the cell inner membrane. It carries out the reaction Zn(2+)(out) + ATP(in) + H2O(in) = Zn(2+)(in) + ADP(in) + phosphate(in) + H(+)(in). Functionally, part of the ABC transporter complex ZnuABC involved in zinc import. Responsible for energy coupling to the transport system. This chain is Zinc import ATP-binding protein ZnuC, found in Vibrio vulnificus (strain CMCP6).